We begin with the raw amino-acid sequence, 521 residues long: Glutamate--tRNA ligase (521 aa).

The 'HIGH' region motif lies at 30–40; it reads PSPTGYLHVGG. Residues 277-281 carry the 'KMSKS' region motif; sequence KLSKR. Lys280 lines the ATP pocket.

Belongs to the class-I aminoacyl-tRNA synthetase family. Glutamate--tRNA ligase type 1 subfamily. As to quaternary structure, monomer.

The protein resides in the cytoplasm. It carries out the reaction tRNA(Glu) + L-glutamate + ATP = L-glutamyl-tRNA(Glu) + AMP + diphosphate. Catalyzes the attachment of glutamate to tRNA(Glu) in a two-step reaction: glutamate is first activated by ATP to form Glu-AMP and then transferred to the acceptor end of tRNA(Glu). The chain is Glutamate--tRNA ligase from Chlorobium phaeovibrioides (strain DSM 265 / 1930) (Prosthecochloris vibrioformis (strain DSM 265)).